A 212-amino-acid chain; its full sequence is MQLFHLCLVISCSCPTVQASKLCLGWLWGMDIDPYKEFGATVELLSFLPSDFFPSVRDLLDTVSALYREALKSPEHCSPHHTALRQAILCWGELMTLATWVGNNLEDPASRDLVVNYVNTNMGLKIRQLWWFHISCLTFGRETVLEYLVSFGVWIRTPPAYRPPNAPILSTLPETTVVRRRGRSPRRRTPSPRRRRSQSPRRRRSQSRESQC.

The N-terminal stretch at 1–19 (MQLFHLCLVISCSCPTVQA) is a signal peptide. The interval 25 to 27 (GWL) is HBEAG. The disordered stretch occupies residues 165–212 (NAPILSTLPETTVVRRRGRSPRRRTPSPRRRRSQSPRRRRSQSRESQC). A compositionally biased stretch (basic residues) spans 178 to 205 (VRRRGRSPRRRTPSPRRRRSQSPRRRRS). The 1; half-length repeat unit spans residues 184–190 (SPRRRTP). The tract at residues 184–206 (SPRRRTPSPRRRRSQSPRRRRSQ) is 3 X 8 AA repeats of S-P-R-R-R-R-S-Q. A propeptide spanning residues 184–212 (SPRRRTPSPRRRRSQSPRRRRSQSRESQC) is cleaved from the precursor. A run of 2 repeats spans residues 191-198 (SPRRRRSQ) and 199-206 (SPRRRRSQ).

The protein belongs to the orthohepadnavirus precore antigen family. As to quaternary structure, homodimerizes. Post-translationally, phosphorylated. In terms of processing, cleaved by host furin.

It is found in the secreted. It localises to the host nucleus. Functionally, may regulate immune response to the intracellular capsid in acting as a T-cell tolerogen, by having an immunoregulatory effect which prevents destruction of infected cells by cytotoxic T-cells. This immune regulation may predispose to chronicity during perinatal infections and prevent severe liver injury during adult infections. The chain is External core antigen from Hepatitis B virus genotype B1 subtype adw (isolate Japan/pJDW233/1988) (HBV-B).